Consider the following 329-residue polypeptide: MSNAKILATGKSVPDSIFTNEDLEKMVETSDSWITSRTGIKERRIADENTATSHLSVQAAEIALNKSGIEPADLDMIIVATVTPDMAFPSTACLVQDKLGADQACAFDLEAACTGFLYGLRIASQFIATDTHKYILVIGSETLSKIVDWEDRNTCVLFGDGAGAAVLGPVENGEEDKGLISFDLGADGSKGELLQQPAGGSLKPATLETVSSKEHFIKMNGNEVFKFAVKVIGDTTEKALKKIDKTTEDIDLFIPHQANQRIIDSATNRLGISKEKTFVNLQNYGNMSAASIPVALDEAIEENLIKEDDLVALVGFGGGLTWGSCLIKW.

Residues C113 and H256 contribute to the active site. Positions 257–261 (QANQR) are ACP-binding. Residue N286 is part of the active site.

Belongs to the thiolase-like superfamily. FabH family. Homodimer.

The protein localises to the cytoplasm. It catalyses the reaction malonyl-[ACP] + acetyl-CoA + H(+) = 3-oxobutanoyl-[ACP] + CO2 + CoA. Its pathway is lipid metabolism; fatty acid biosynthesis. Its function is as follows. Catalyzes the condensation reaction of fatty acid synthesis by the addition to an acyl acceptor of two carbons from malonyl-ACP. Catalyzes the first condensation reaction which initiates fatty acid synthesis and may therefore play a role in governing the total rate of fatty acid production. Possesses both acetoacetyl-ACP synthase and acetyl transacylase activities. Its substrate specificity determines the biosynthesis of branched-chain and/or straight-chain of fatty acids. The sequence is that of Beta-ketoacyl-[acyl-carrier-protein] synthase III from Natranaerobius thermophilus (strain ATCC BAA-1301 / DSM 18059 / JW/NM-WN-LF).